The sequence spans 113 residues: Large ribosomal subunit protein bL19 (113 aa).

The protein belongs to the bacterial ribosomal protein bL19 family.

In terms of biological role, this protein is located at the 30S-50S ribosomal subunit interface and may play a role in the structure and function of the aminoacyl-tRNA binding site. In Mycobacterium marinum (strain ATCC BAA-535 / M), this protein is Large ribosomal subunit protein bL19.